Consider the following 1059-residue polypeptide: WD repeat-containing protein on Y chromosome (1059 aa).

11 WD repeats span residues 121–161 (DFCP…ALTA), 170–209 (RSKT…FTLK), 214–256 (RLPQ…KVTT), 344–383 (CVPR…KPSV), 387–426 (GHTS…LLQT), 476–515 (SHTK…KMTI), 528–567 (LEPV…CMRT), 616–658 (QHSD…RRYD), 714–759 (MRQL…GFKG), 766–805 (MAGD…IPNE), and 849–888 (AHRA…IGLL).

The polypeptide is WD repeat-containing protein on Y chromosome (Anopheles gambiae (African malaria mosquito)).